The following is a 131-amino-acid chain: Agouti-signaling protein (131 aa).

Positions 1-20 (MNIFRLLLATLLVSLCFLTA) are cleaved as a signal peptide. A glycan (N-linked (GlcNAc...) asparagine) is linked at Asn-38. Positions 57–104 (KSKKISRKEAEKKRSSKKKASMKNVARPRPPPPNPCVATRNSCKSPAP) are disordered. 5 disulfide bridges follow: Cys-92–Cys-107, Cys-99–Cys-113, Cys-106–Cys-124, Cys-110–Cys-131, and Cys-115–Cys-122. The region spanning 92-131 (CVATRNSCKSPAPACCDPCASCQCRFFRSACTCRVLSPSC) is the Agouti domain.

It is found in the secreted. Its function is as follows. Involved in the regulation of melanogenesis. The binding of ASP to MC1R precludes alpha-MSH initiated signaling and thus blocks production of cAMP, leading to a down-regulation of eumelanogenesis (brown/black pigment) and thus increasing synthesis of pheomelanin (yellow/red pigment). This Vulpes vulpes (Red fox) protein is Agouti-signaling protein (ASIP).